Consider the following 474-residue polypeptide: Recombinase Flp protein (474 aa).

In terms of domain architecture, Tyr recombinase Flp-type spans 135–421 (LSNNVGAEIS…LYLYTYAQQK (287 aa)). Tyrosine 342 functions as the O-(3'-phospho-DNA)-tyrosine intermediate in the catalytic mechanism. Residues 426–474 (ADPNEQNRLFSSESPAHPFLTPQSTGSSTPLTWTAPKTLSTGLMTPGEE) form a disordered region. Composition is skewed to polar residues over residues 429–439 (NEQNRLFSSES) and 446–468 (TPQS…STGL).

This sequence belongs to the 'phage' integrase family.

Catalyzes the recombination between the large inverted repetitions of the plasmid. This chain is Recombinase Flp protein, found in Zygosaccharomyces bailii.